A 450-amino-acid polypeptide reads, in one-letter code: Mitochondrial distribution and morphology protein 10 (450 aa).

Belongs to the MDM10 family. As to quaternary structure, component of the ER-mitochondria encounter structure (ERMES) or MDM complex, composed of MMM1, MDM10, MDM12 and MDM34. Associates with the mitochondrial outer membrane sorting assembly machinery SAM(core) complex.

The protein localises to the mitochondrion outer membrane. Component of the ERMES/MDM complex, which serves as a molecular tether to connect the endoplasmic reticulum and mitochondria. Components of this complex are involved in the control of mitochondrial shape and protein biogenesis and may function in phospholipid exchange. MDM10 is involved in the late assembly steps of the general translocase of the mitochondrial outer membrane (TOM complex). Functions in the TOM40-specific route of the assembly of outer membrane beta-barrel proteins, including the association of TOM40 with the receptor TOM22 and small TOM proteins. Can associate with the SAM(core) complex as well as the MDM12-MMM1 complex, both involved in late steps of the major beta-barrel assembly pathway, that is responsible for biogenesis of all outer membrane beta-barrel proteins. May act as a switch that shuttles between both complexes and channels precursor proteins into the TOM40-specific pathway. Plays a role in mitochondrial morphology and in the inheritance of mitochondria. This Paracoccidioides lutzii (strain ATCC MYA-826 / Pb01) (Paracoccidioides brasiliensis) protein is Mitochondrial distribution and morphology protein 10.